The following is an 89-amino-acid chain: Small ribosomal subunit protein uS15 (89 aa).

It belongs to the universal ribosomal protein uS15 family. In terms of assembly, part of the 30S ribosomal subunit. Forms a bridge to the 50S subunit in the 70S ribosome, contacting the 23S rRNA.

In terms of biological role, one of the primary rRNA binding proteins, it binds directly to 16S rRNA where it helps nucleate assembly of the platform of the 30S subunit by binding and bridging several RNA helices of the 16S rRNA. Its function is as follows. Forms an intersubunit bridge (bridge B4) with the 23S rRNA of the 50S subunit in the ribosome. This Shewanella baltica (strain OS223) protein is Small ribosomal subunit protein uS15.